A 551-amino-acid polypeptide reads, in one-letter code: Protein MTL1 (551 aa).

The N-terminal stretch at 1 to 35 (MASCNPTRKKSSASSLSMWRTILMALTTLPLSVLS) is a signal peptide. The Extracellular segment spans residues 36–361 (QELVPANSTT…HSGLSKKNRN (326 aa)). Disordered regions lie at residues 108–143 (MQVSSSSTSSSSSEVTSSSSSSSISPSSSSSTIISS), 206–227 (PSSSTSSPPSSSSELTSSSYSS), and 243–263 (SSSSSSSSSSSSSSSSSSSSS). Residues 362–382 (IIIGCVVGIGAPLILILLILI) form a helical membrane-spanning segment. Over 383–551 (YMFCVQPKKT…PNNGLNITNY (169 aa)) the chain is Cytoplasmic. Positions 429-513 (SSDSPIGSNN…SNSNSQDYND (85 aa)) are disordered. Positions 430 to 441 (SDSPIGSNNIQN) are enriched in polar residues. Residues 466–477 (GYDDDDDDDAND) are compositionally biased toward acidic residues. A phosphoserine mark is found at serine 481 and serine 482. Low complexity predominate over residues 498–508 (SASYSMSNSNS).

This sequence belongs to the MID2 like cell wall stress sensor family.

The protein localises to the membrane. Its function is as follows. Involved in cell integrity signaling during vegetative growth at elevated temperature. Acts positively on the PKC1-MAPK pathway. Cell membrane sensor of oxidative stress in the cell integrity pathway upstream of PKC1. Required to transmit the oxidative signal to SLT2 and to restore the correct actin organization following oxidative stress. Multicopy suppressor of 1,3-beta-glucan synthase (GS) mutation. Also suppresses RGD1 null mutations. The sequence is that of Protein MTL1 (MTL1) from Saccharomyces cerevisiae (strain ATCC 204508 / S288c) (Baker's yeast).